Reading from the N-terminus, the 898-residue chain is Cip1-interacting zinc finger protein (898 aa).

Disordered stretches follow at residues 48–69, 157–305, and 318–471; these read QAPL…QPLL, QSLL…ALEA, and VQAQ…QPQV. Positions 170–203 are enriched in polar residues; that stretch reads NPSQFNLSGRNPQKQARTSSSTTPNRKDSSSQTM. Residue S209 is modified to Phosphoserine. T244 bears the Phosphothreonine mark. Residues 263-273 are compositionally biased toward basic and acidic residues; it reads RSSEEPTEKEP. K280 participates in a covalent cross-link: Glycyl lysine isopeptide (Lys-Gly) (interchain with G-Cter in SUMO2). Over residues 318 to 327 the composition is skewed to low complexity; that stretch reads VQAQVQSQTQ. Polar residues predominate over residues 328-351; that stretch reads PRIPSTDTQVQPKLQKQAQTQTSP. K340 is covalently cross-linked (Glycyl lysine isopeptide (Lys-Gly) (interchain with G-Cter in SUMO2)). A Phosphoserine modification is found at S350. A compositionally biased stretch (low complexity) spans 355 to 383; the sequence is VLQQKQVQPQLQQEAEPQKQVQPQVQPQA. Over residues 384-395 the composition is skewed to polar residues; it reads HSQGPRQVQLQQ. Residue K401 forms a Glycyl lysine isopeptide (Lys-Gly) (interchain with G-Cter in SUMO2) linkage. Over residues 402–435 the composition is skewed to low complexity; the sequence is QVQPQVQPQAHSQPPRQVQLQLQKQVQTQTYPQV. A compositionally biased stretch (polar residues) spans 436–445; it reads HTQAQPSVQP. Position 547 is a phosphoserine (S547). K549 is covalently cross-linked (Glycyl lysine isopeptide (Lys-Gly) (interchain with G-Cter in SUMO2)). A disordered region spans residues 562-584; it reads STVPLTPVPRPSDSVSSTPAATS. T567 carries the post-translational modification Phosphothreonine. The span at 572–584 shows a compositional bias: low complexity; sequence PSDSVSSTPAATS. Residues K588, K680, and K705 each participate in a glycyl lysine isopeptide (Lys-Gly) (interchain with G-Cter in SUMO2) cross-link. A Matrin-type zinc finger spans residues 799 to 830; it reads YICRICHKFYHSNSGAQLSHCKSLGHFENLQK. S821 carries the phosphoserine modification. K830 is covalently cross-linked (Glycyl lysine isopeptide (Lys-Gly) (interchain with G-Cter in SUMO2)). S838 is subject to Phosphoserine. Residues 859–879 show a composition bias toward polar residues; the sequence is LFTSSGRPPSQPNTQDKTPSK. Residues 859–898 form a disordered region; the sequence is LFTSSGRPPSQPNTQDKTPSKVTARPSQPPLPRRSTRLKT. K879 participates in a covalent cross-link: Glycyl lysine isopeptide (Lys-Gly) (interchain with G-Cter in SUMO2).

As to quaternary structure, interacts with CIP/WAF1.

The protein resides in the nucleus. Its function is as follows. May regulate the subcellular localization of CIP/WAF1. In Homo sapiens (Human), this protein is Cip1-interacting zinc finger protein (CIZ1).